Here is a 154-residue protein sequence, read N- to C-terminus: AP-1 complex subunit sigma-3 (154 aa).

It belongs to the adaptor complexes small subunit family. In terms of assembly, adaptor protein complex 1 (AP-1) is a heterotetramer composed of two large adaptins (gamma-type subunit AP1G1 and beta-type subunit AP1B1), a medium adaptin (mu-type subunit AP1M1 or AP1M2) and a small adaptin (sigma-type subunit AP1S1 or AP1S2 or AP1S3). As to expression, widely expressed.

Its subcellular location is the golgi apparatus. It is found in the cytoplasmic vesicle membrane. The protein resides in the membrane. It localises to the clathrin-coated pit. Subunit of clathrin-associated adaptor protein complex 1 that plays a role in protein sorting in the late-Golgi/trans-Golgi network (TGN) and/or endosomes. The AP complexes mediate both the recruitment of clathrin to membranes and the recognition of sorting signals within the cytosolic tails of transmembrane cargo molecules. Involved in TLR3 trafficking. The chain is AP-1 complex subunit sigma-3 (AP1S3) from Homo sapiens (Human).